Reading from the N-terminus, the 398-residue chain is Lymphocyte transmembrane adapter 1 (398 aa).

The Extracellular portion of the chain corresponds to 1–37; the sequence is MDGVTPTLSTIRGRTLESSTLHVTPRSLDRNKDQITN. A helical; Signal-anchor for type III membrane protein membrane pass occupies residues 38–58; that stretch reads IFSGFAGLLAILLVVAVFCIL. Residues 59–398 lie on the Cytoplasmic side of the membrane; the sequence is WNWNKRKKRQ…GPGTQLLPDE (340 aa). At Tyr-193 the chain carries Phosphotyrosine. Residues 228 to 261 are disordered; the sequence is TEERDEGCGDAGDCTSLYSPGAEDSDSLSNGEGS. Phosphotyrosine is present on residues Tyr-268 and Tyr-294. The interval 298 to 330 is disordered; it reads PAADPSGSQQQAEKDVPSSNIGHVEDKTDDPGT. Residues 303 to 318 are compositionally biased toward polar residues; that stretch reads SGSQQQAEKDVPSSNI. A compositionally biased stretch (basic and acidic residues) spans 320–329; that stretch reads HVEDKTDDPG. Tyr-345 and Tyr-373 each carry phosphotyrosine. The segment at 347 to 398 is disordered; that stretch reads DFQPFTQSEDSQMKHREEMSNEDSSDYENVLTAKLGGRDSEQGPGTQLLPDE.

As to quaternary structure, when phosphorylated, interacts with GRB2, PIK3R1 and GRAP2. Post-translationally, phosphorylated on tyrosines by Syk, Lck or ZAP70 upon TCR or BCR activation; which leads to the recruitment of GRB2, PIK3R1 and GRAP2. In terms of tissue distribution, expressed in spleen, thymus, and peripheral blood leukocytes. Expressed in several B-, T-, NK and monocyte cell lines.

Its subcellular location is the cell membrane. Functionally, negatively regulates TCR (T-cell antigen receptor)-mediated signaling in T-cells and BCR (B-cell antigen receptor)-mediated signaling in B-cells. This is Lymphocyte transmembrane adapter 1 (LAX1) from Homo sapiens (Human).